Reading from the N-terminus, the 401-residue chain is Nodal homolog 3-B (401 aa).

A signal peptide spans 1 to 18; the sequence is MALLNLFFCLVFSSPLMA. A propeptide spanning residues 19-274 is cleaved from the precursor; it reads MPPVLQGRKS…KVNGFRRLRR (256 aa). Asn-168, Asn-337, Asn-341, and Asn-344 each carry an N-linked (GlcNAc...) asparagine glycan. 2 disulfide bridges follow: Cys-299-Cys-365 and Cys-328-Cys-396.

The protein belongs to the TGF-beta family. Monomer. The propeptide region interacts with bmp4 in a non-covalent manner. As to expression, expressed in the dorsal marginal region of late blastula, becoming restricted to the dorsal blastopore lip (Spemann organizer) at the early gastrula stage.

The protein localises to the secreted. Exhibits mesoderm-dorsalizing activity and neural-inducing activity, but lacks mesoderm-inducing activity. Regulates the expression of specific mesodermal and neural genes. Induces convergent extension movements at the embryonic midline by activating the fgf signaling pathway to induce t/bra expression in the organizer region. Acts with wnt11 to induce Spemann organizer cells and induce axis formation. The unprocessed protein antagonizes bmp-signaling. This Xenopus laevis (African clawed frog) protein is Nodal homolog 3-B (nodal3-b).